A 73-amino-acid polypeptide reads, in one-letter code: Translation initiation factor IF-1 (73 aa).

In terms of domain architecture, S1-like spans 1 to 72 (MAKEEAIEKD…SKGRIVYRYK (72 aa)).

This sequence belongs to the IF-1 family. In terms of assembly, component of the 30S ribosomal translation pre-initiation complex which assembles on the 30S ribosome in the order IF-2 and IF-3, IF-1 and N-formylmethionyl-tRNA(fMet); mRNA recruitment can occur at any time during PIC assembly.

It is found in the cytoplasm. Functionally, one of the essential components for the initiation of protein synthesis. Stabilizes the binding of IF-2 and IF-3 on the 30S subunit to which N-formylmethionyl-tRNA(fMet) subsequently binds. Helps modulate mRNA selection, yielding the 30S pre-initiation complex (PIC). Upon addition of the 50S ribosomal subunit IF-1, IF-2 and IF-3 are released leaving the mature 70S translation initiation complex. The chain is Translation initiation factor IF-1 from Salinibacter ruber (strain DSM 13855 / M31).